The chain runs to 224 residues: V-type ATP synthase subunit D (224 aa).

Over residues alanine 205–isoleucine 214 the composition is skewed to basic and acidic residues. Positions alanine 205–aspartate 224 are disordered. The segment covering glutamine 215 to aspartate 224 has biased composition (polar residues).

Belongs to the V-ATPase D subunit family.

Produces ATP from ADP in the presence of a proton gradient across the membrane. This Deinococcus deserti (strain DSM 17065 / CIP 109153 / LMG 22923 / VCD115) protein is V-type ATP synthase subunit D.